Consider the following 173-residue polypeptide: MSIILGIDPGSRITGYGVIRQNGRHLQYLGSGCIRMSEKELPGRLKQIYAGVSEIITQFQPDVFAIEQVFMSKNADSALKLGQARGSAIVAAVNADLPVYEYAARLIKQAVTGTGAADKAQVQHMVMTMLKLPARPQADAADGLGVAICHANTNKTLIALAGKATGARRGRYR.

Residues D8, E67, and D139 contribute to the active site. 3 residues coordinate Mg(2+): D8, E67, and D139.

It belongs to the RuvC family. As to quaternary structure, homodimer which binds Holliday junction (HJ) DNA. The HJ becomes 2-fold symmetrical on binding to RuvC with unstacked arms; it has a different conformation from HJ DNA in complex with RuvA. In the full resolvosome a probable DNA-RuvA(4)-RuvB(12)-RuvC(2) complex forms which resolves the HJ. Requires Mg(2+) as cofactor.

It localises to the cytoplasm. It catalyses the reaction Endonucleolytic cleavage at a junction such as a reciprocal single-stranded crossover between two homologous DNA duplexes (Holliday junction).. Its function is as follows. The RuvA-RuvB-RuvC complex processes Holliday junction (HJ) DNA during genetic recombination and DNA repair. Endonuclease that resolves HJ intermediates. Cleaves cruciform DNA by making single-stranded nicks across the HJ at symmetrical positions within the homologous arms, yielding a 5'-phosphate and a 3'-hydroxyl group; requires a central core of homology in the junction. The consensus cleavage sequence is 5'-(A/T)TT(C/G)-3'. Cleavage occurs on the 3'-side of the TT dinucleotide at the point of strand exchange. HJ branch migration catalyzed by RuvA-RuvB allows RuvC to scan DNA until it finds its consensus sequence, where it cleaves and resolves the cruciform DNA. The chain is Crossover junction endodeoxyribonuclease RuvC from Aliivibrio salmonicida (strain LFI1238) (Vibrio salmonicida (strain LFI1238)).